A 390-amino-acid chain; its full sequence is Transposase for insertion sequence element IS21 (390 aa).

The HTH IS21-type domain maps to 5–66 (EDFYMIKQMR…PFMDYIDMRL (62 aa)). Residues 20–39 (IVDIATQIGCSERTVRRYLK) constitute a DNA-binding region (H-T-H motif). In terms of domain architecture, Integrase catalytic spans 111–285 (FETQPRYQLQ…TPEQRFALEQ (175 aa)).

It belongs to the transposase IS21/IS408/IS1162 family.

In terms of biological role, involved in the transposition of the insertion sequence. The sequence is that of Transposase for insertion sequence element IS21 (istA) from Pseudomonas aeruginosa.